The sequence spans 174 residues: Large ribosomal subunit protein uL18 (174 aa).

The protein belongs to the universal ribosomal protein uL18 family. Part of the 50S ribosomal subunit. Contacts the 5S and 23S rRNAs.

In terms of biological role, this is one of the proteins that bind and probably mediate the attachment of the 5S RNA into the large ribosomal subunit, where it forms part of the central protuberance. This chain is Large ribosomal subunit protein uL18, found in Methanosarcina barkeri (strain Fusaro / DSM 804).